Consider the following 110-residue polypeptide: Protein mistic (110 aa).

The Cytoplasmic segment spans residues 1 to 7 (MFCTFFE). Residues 8–22 (KHHRKWDILLEKSTG) traverse the membrane as a helical segment. Residues 23-31 (VMEAMKVTS) lie on the Extracellular side of the membrane. Residues 32–55 (EEKEQLSTAIDRMNEGLDAFIQLY) form a helical membrane-spanning segment. At 56–66 (NESEIDEPLIQ) the chain is on the cytoplasmic side. Residues 67-81 (LDDDTAELMKQARDM) traverse the membrane as a helical segment. The Extracellular portion of the chain corresponds to 82–88 (YGQEKLN). Residues 89–102 (EKLNTIIKQILSIS) traverse the membrane as a helical segment. Residues 103–110 (VSEEGEKE) lie on the Cytoplasmic side of the membrane.

As to quaternary structure, monomer.

Its subcellular location is the cell membrane. Chaperone that facilitates the production and integration of integral membrane proteins into the bacterial lipid bilayer. In Bacillus subtilis (strain 168), this protein is Protein mistic (mstX).